Reading from the N-terminus, the 1088-residue chain is Calcium-transporting ATPase 5, plasma membrane-type (1088 aa).

The segment covering 1–11 has biased composition (low complexity); that stretch reads MESASSSLATS. The interval 1–32 is disordered; sequence MESASSSLATSGRRRSSSGGGGGSWGSIGSAA. Residues 1 to 198 lie on the Cytoplasmic side of the membrane; it reads MESASSSLAT…FLWDACKDLT (198 aa). The helical transmembrane segment at 199 to 219 threads the bilayer; the sequence is LIILMVAAAVSLALGITTEGI. Residues 220-221 are Extracellular-facing; that stretch reads KE. A helical transmembrane segment spans residues 222 to 242; that stretch reads GWYDGASIAFAVLLVVVVTAT. Topologically, residues 243–338 are cytoplasmic; that stretch reads SDYKQSLQFQ…MSGCKVADGY (96 aa). A helical transmembrane segment spans residues 339-359; it reads GTMLVTAVGINTEWGLLMASI. The Extracellular segment spans residues 360-375; the sequence is SEDSGEETPLQVRLNG. Residues 376-396 form a helical membrane-spanning segment; sequence VATFIGMVGLSVALAVLVVLL. Topologically, residues 397-425 are cytoplasmic; it reads ARYFTGHTYNPDGSVQYVKGKMGVGQTIR. The chain crosses the membrane as a helical span at residues 426 to 446; that stretch reads GIVGIFTVAVTIVVVAVPEGL. Residues 447–851 lie on the Extracellular side of the membrane; sequence PLAVTLTLAF…GRSVYANIQK (405 aa). Catalysis depends on Asp486, which acts as the 4-aspartylphosphate intermediate. N-linked (GlcNAc...) asparagine glycosylation is found at Asn532, Asn569, and Asn737. Positions 794 and 798 each coordinate Mg(2+). Residues 852 to 872 traverse the membrane as a helical segment; that stretch reads FIQFQLTVNVAALIINVVAAV. Topologically, residues 873-880 are cytoplasmic; the sequence is SSGNVPLN. The chain crosses the membrane as a helical span at residues 881 to 901; that stretch reads AVQLLWVNLIMDTLGALALAT. The Extracellular portion of the chain corresponds to 902–919; the sequence is EPPTDHLMQRPPVGRREP. The helical transmembrane segment at 920 to 940 threads the bilayer; it reads LITNVMWRNLIIMALFQVIVL. The Cytoplasmic portion of the chain corresponds to 941-1000; it reads LTLNFRGTSLLQLKNDNQAHADKVKNTFIFNTFVLCQVFNEFNARKPDELNIFKGITGNH. The helical transmembrane segment at 1001-1021 threads the bilayer; that stretch reads LFMAIVAITVVLQALIVEFLG. The Extracellular segment spans residues 1022–1030; that stretch reads KFTSTTRLT. The chain crosses the membrane as a helical span at residues 1031–1051; sequence WQLWLVSIGLAFFSWPLAFVG. Topologically, residues 1052–1088 are cytoplasmic; the sequence is KLIPVPERPLGDFFACCCPGSKQAADAKGDDADHSDV.

Belongs to the cation transport ATPase (P-type) (TC 3.A.3) family. Type IIB subfamily. As to quaternary structure, interacts with NOH1.

It is found in the cell membrane. It carries out the reaction Ca(2+)(in) + ATP + H2O = Ca(2+)(out) + ADP + phosphate + H(+). Activated by calmodulin. Functionally, this magnesium-dependent enzyme catalyzes the hydrolysis of ATP coupled with the translocation of calcium from the cytosol out of the cell, into the endoplasmic reticulum, or into organelles. Involved in salt and drought stress tolerance. Involved in cold stress tolerance. The chain is Calcium-transporting ATPase 5, plasma membrane-type from Oryza sativa subsp. japonica (Rice).